The following is a 363-amino-acid chain: 3-dehydroquinate synthase (363 aa).

NAD(+) is bound by residues 75-80 (DAEEGK), 109-113 (GAVTD), 133-134 (TS), K146, K155, and 173-176 (TLQT). The Zn(2+) site is built by E188, H251, and H267.

This sequence belongs to the sugar phosphate cyclases superfamily. Dehydroquinate synthase family. Requires Co(2+) as cofactor. The cofactor is Zn(2+). It depends on NAD(+) as a cofactor.

The protein localises to the cytoplasm. It catalyses the reaction 7-phospho-2-dehydro-3-deoxy-D-arabino-heptonate = 3-dehydroquinate + phosphate. The protein operates within metabolic intermediate biosynthesis; chorismate biosynthesis; chorismate from D-erythrose 4-phosphate and phosphoenolpyruvate: step 2/7. In terms of biological role, catalyzes the conversion of 3-deoxy-D-arabino-heptulosonate 7-phosphate (DAHP) to dehydroquinate (DHQ). The sequence is that of 3-dehydroquinate synthase from Paenarthrobacter aurescens (strain TC1).